The sequence spans 473 residues: Cell division protein FtsP (473 aa).

Residues 1 to 27 constitute a signal peptide (tat-type signal); sequence MSFSRRQFLQASGLAVCLGSLSSSVRA.

This sequence belongs to the FtsP family. In terms of processing, predicted to be exported by the Tat system. The position of the signal peptide cleavage has not been experimentally proven.

Its subcellular location is the periplasm. Its function is as follows. Cell division protein that is required for growth during stress conditions. May be involved in protecting or stabilizing the divisomal assembly under conditions of stress. This is Cell division protein FtsP from Proteus mirabilis (strain HI4320).